The chain runs to 210 residues: Pyridoxine/pyridoxamine 5'-phosphate oxidase (210 aa).

Residues 7-10 and Lys-65 contribute to the substrate site; that span reads REDY. Residues 60–65, 75–76, Arg-81, Lys-82, and Gln-104 contribute to the FMN site; these read RVVLLK and FT. Substrate-binding residues include Tyr-122, Arg-126, and Ser-130. FMN contacts are provided by residues 139-140 and Trp-183; that span reads QS. A substrate-binding site is contributed by 189 to 191; the sequence is RLH. Residue Arg-193 coordinates FMN.

It belongs to the pyridoxamine 5'-phosphate oxidase family. In terms of assembly, homodimer. The cofactor is FMN.

The catalysed reaction is pyridoxamine 5'-phosphate + O2 + H2O = pyridoxal 5'-phosphate + H2O2 + NH4(+). It catalyses the reaction pyridoxine 5'-phosphate + O2 = pyridoxal 5'-phosphate + H2O2. It participates in cofactor metabolism; pyridoxal 5'-phosphate salvage; pyridoxal 5'-phosphate from pyridoxamine 5'-phosphate: step 1/1. Its pathway is cofactor metabolism; pyridoxal 5'-phosphate salvage; pyridoxal 5'-phosphate from pyridoxine 5'-phosphate: step 1/1. Functionally, catalyzes the oxidation of either pyridoxine 5'-phosphate (PNP) or pyridoxamine 5'-phosphate (PMP) into pyridoxal 5'-phosphate (PLP). The chain is Pyridoxine/pyridoxamine 5'-phosphate oxidase from Actinobacillus succinogenes (strain ATCC 55618 / DSM 22257 / CCUG 43843 / 130Z).